A 358-amino-acid polypeptide reads, in one-letter code: Peptide chain release factor 1 (358 aa).

An N5-methylglutamine modification is found at Gln-235.

Belongs to the prokaryotic/mitochondrial release factor family. In terms of processing, methylated by PrmC. Methylation increases the termination efficiency of RF1.

It is found in the cytoplasm. Functionally, peptide chain release factor 1 directs the termination of translation in response to the peptide chain termination codons UAG and UAA. This is Peptide chain release factor 1 from Nitrosospira multiformis (strain ATCC 25196 / NCIMB 11849 / C 71).